Consider the following 756-residue polypeptide: Catalase-peroxidase (756 aa).

A cross-link (tryptophyl-tyrosyl-methioninium (Trp-Tyr) (with M-270)) is located at residues 91–244; that stretch reads WHSAGTYRTG…LAAVQMGLIY (154 aa). H92 serves as the catalytic Proton acceptor. The disordered stretch occupies residues 198-230; the sequence is AQKKMQQPGDGTLVAEPENHANEESRTASGERN. Positions 214–223 are enriched in basic and acidic residues; sequence PENHANEESR. Residues 244–270 constitute a cross-link (tryptophyl-tyrosyl-methioninium (Tyr-Met) (with W-91)); sequence YVNPEGPEGVPDPVASARDIRETFGRM. A heme b-binding site is contributed by H285. Residues 371 to 390 form a disordered region; sequence KNGAGAGKIPDAHDPSKRHA.

The protein belongs to the peroxidase family. Peroxidase/catalase subfamily. In terms of assembly, homodimer or homotetramer. The cofactor is heme b. In terms of processing, formation of the three residue Trp-Tyr-Met cross-link is important for the catalase, but not the peroxidase activity of the enzyme.

The enzyme catalyses H2O2 + AH2 = A + 2 H2O. The catalysed reaction is 2 H2O2 = O2 + 2 H2O. Its function is as follows. Bifunctional enzyme with both catalase and broad-spectrum peroxidase activity. The protein is Catalase-peroxidase of Pseudomonas syringae pv. tomato (strain ATCC BAA-871 / DC3000).